A 656-amino-acid chain; its full sequence is Macrolide export ATP-binding/permease protein MacB (656 aa).

In terms of domain architecture, ABC transporter spans 6–244; that stretch reads LEVSACYRSF…AAPKTEVIPA (239 aa). 42–49 contacts ATP; it reads GASGSGKS. Transmembrane regions (helical) follow at residues 277 to 297, 531 to 551, 586 to 606, and 621 to 641; these read FLTM…VALG, LLIS…VMNI, LVCL…GVVF, and SIVA…FLPA.

This sequence belongs to the ABC transporter superfamily. Macrolide exporter (TC 3.A.1.122) family. In terms of assembly, homodimer. Part of the tripartite efflux system MacAB-TolC, which is composed of an inner membrane transporter, MacB, a periplasmic membrane fusion protein, MacA, and an outer membrane component, TolC. The complex forms a large protein conduit and can translocate molecules across both the inner and outer membranes. Interacts with MacA.

Its subcellular location is the cell inner membrane. In terms of biological role, part of the tripartite efflux system MacAB-TolC. MacB is a non-canonical ABC transporter that contains transmembrane domains (TMD), which form a pore in the inner membrane, and an ATP-binding domain (NBD), which is responsible for energy generation. Confers resistance against macrolides. This Shewanella sp. (strain ANA-3) protein is Macrolide export ATP-binding/permease protein MacB.